A 249-amino-acid polypeptide reads, in one-letter code: Dihydroneopterin 2',3'-cyclic phosphate phosphodiesterase (249 aa).

An HD domain is found at 58-172 (LIEHTISVTK…VHYADEADSK (115 aa)).

As to quaternary structure, homododecamer. Fe(2+) is required as a cofactor. Requires Zn(2+) as cofactor.

It carries out the reaction 7,8-dihydroneopterin 2',3'-cyclic phosphate + H2O = 7,8-dihydroneopterin 3'-phosphate + H(+). It catalyses the reaction 7,8-dihydroneopterin 2',3'-cyclic phosphate + H2O = 7,8-dihydroneopterin 2'-phosphate + H(+). The protein operates within cofactor biosynthesis; 5,6,7,8-tetrahydromethanopterin biosynthesis. Its function is as follows. Cyclic phosphodiesterase that hydrolyzes the cyclic phosphate of 7,8-dihydroneopterin 2',3'-cyclic phosphate (H2N-cP) and converts it to a mixture of 7,8-dihydroneopterin 2'-phosphate (H2N-2'P) and 7,8-dihydroneopterin 3'-phosphate (H2N-3'P). Is also able to utilize other phosphodiesters as substrates in vitro: hydrolysis of bis-pNPP and pNPPC produces nitrophenyl phosphate, and that of 2',3'-cAMP produces 3'-AMP. ATP, 3',5'-cAMP, GTP, 3',5'-cGMP, and 4',5'-cFMN cannot serve as substrates. The chain is Dihydroneopterin 2',3'-cyclic phosphate phosphodiesterase (mptB) from Methanocaldococcus jannaschii (strain ATCC 43067 / DSM 2661 / JAL-1 / JCM 10045 / NBRC 100440) (Methanococcus jannaschii).